An 89-amino-acid polypeptide reads, in one-letter code: Small ribosomal subunit protein uS15 (89 aa).

Belongs to the universal ribosomal protein uS15 family. In terms of assembly, part of the 30S ribosomal subunit. Forms a bridge to the 50S subunit in the 70S ribosome, contacting the 23S rRNA.

Functionally, one of the primary rRNA binding proteins, it binds directly to 16S rRNA where it helps nucleate assembly of the platform of the 30S subunit by binding and bridging several RNA helices of the 16S rRNA. In terms of biological role, forms an intersubunit bridge (bridge B4) with the 23S rRNA of the 50S subunit in the ribosome. This is Small ribosomal subunit protein uS15 from Pectobacterium atrosepticum (strain SCRI 1043 / ATCC BAA-672) (Erwinia carotovora subsp. atroseptica).